We begin with the raw amino-acid sequence, 277 residues long: Large ribosomal subunit protein uL2 (277 aa).

The interval 222–277 (GVTMNPVDHPHGGGEGRTSGGRHPVTPWGKPTKGKKTRSNKSTNKFILISRHKRKK) is disordered.

It belongs to the universal ribosomal protein uL2 family. In terms of assembly, part of the 50S ribosomal subunit. Forms a bridge to the 30S subunit in the 70S ribosome.

In terms of biological role, one of the primary rRNA binding proteins. Required for association of the 30S and 50S subunits to form the 70S ribosome, for tRNA binding and peptide bond formation. It has been suggested to have peptidyltransferase activity; this is somewhat controversial. Makes several contacts with the 16S rRNA in the 70S ribosome. The sequence is that of Large ribosomal subunit protein uL2 from Rhodopseudomonas palustris (strain BisB18).